The chain runs to 240 residues: Ubiquinone biosynthesis O-methyltransferase (240 aa).

S-adenosyl-L-methionine-binding residues include R44, G64, D85, and M129.

It belongs to the methyltransferase superfamily. UbiG/COQ3 family.

The enzyme catalyses a 3-demethylubiquinol + S-adenosyl-L-methionine = a ubiquinol + S-adenosyl-L-homocysteine + H(+). The catalysed reaction is a 3-(all-trans-polyprenyl)benzene-1,2-diol + S-adenosyl-L-methionine = a 2-methoxy-6-(all-trans-polyprenyl)phenol + S-adenosyl-L-homocysteine + H(+). It participates in cofactor biosynthesis; ubiquinone biosynthesis. Its function is as follows. O-methyltransferase that catalyzes the 2 O-methylation steps in the ubiquinone biosynthetic pathway. The protein is Ubiquinone biosynthesis O-methyltransferase of Escherichia coli O81 (strain ED1a).